The primary structure comprises 414 residues: TAR DNA-binding protein 43 (414 aa).

Residues Lys-79, Lys-84, Lys-95, Lys-102, and Lys-181 each participate in a glycyl lysine isopeptide (Lys-Gly) (interchain with G-Cter in SUMO2) cross-link. RRM domains are found at residues 104 to 200 and 191 to 262; these read SDLI…RCTE and RKVF…NAEP. Residue Ser-183 is modified to Phosphoserine. The segment at 216–414 is interaction with UBQLN2; it reads EVVDVFIPKP…MDSKSSGWGM (199 aa). A compositionally biased stretch (basic and acidic residues) spans 261-274; the sequence is EPKHNSNRQLERSG. Disordered stretches follow at residues 261–301 and 341–414; these read EPKH…GLGN and ASQQ…GWGM. Lys-263 participates in a covalent cross-link: Glycyl lysine isopeptide (Lys-Gly) (interchain with G-Cter in SUMO2). Over residues 275–301 the composition is skewed to gly residues; the sequence is RFGGNPGGFGNQGGFGNSRGGGAGLGN. Ser-292 is subject to Phosphoserine. Arg-293 carries the post-translational modification Omega-N-methylarginine. Low complexity-rich tracts occupy residues 342–358 and 368–392; these read SQQN…SQGS and GSGN…SNAG. Residues 393 to 402 show a composition bias toward gly residues; that stretch reads SGSGFNGGFG. Residues 405–414 show a composition bias toward polar residues; that stretch reads MDSKSSGWGM.

In terms of assembly, homodimer. Homooligomer (via its N-terminal domain). Interacts with BRDT. Binds specifically to pyrimidine-rich motifs of TAR DNA and to single stranded TG repeated sequences. Binds to RNA, specifically to UG repeated sequences with a minimum of six contiguous repeats. Interacts with ATXN2; the interaction is RNA-dependent. Interacts with MATR3. Interacts with UBQLN2. Interacts with HNRNPA2B1. Interacts with ZNF106. Interacts with CNOT7/CAF1. Interacts with CRY2. Interacts with PPIA/CYPA; the interaction is dependent on RNA-binding activity of TARDBP and PPIase activity of PPIA/CYPA. Acetylation of PPIA/CYPA at 'Lys-125' favors the interaction of TARDBP with PPIA/CYPA. In terms of processing, hyperphosphorylated. Ubiquitinated.

The protein resides in the nucleus. It localises to the cytoplasm. The protein localises to the stress granule. Its subcellular location is the mitochondrion. Functionally, RNA-binding protein that is involved in various steps of RNA biogenesis and processing. Preferentially binds, via its two RNA recognition motifs RRM1 and RRM2, to GU-repeats on RNA molecules predominantly localized within long introns and in the 3'UTR of mRNAs. In turn, regulates the splicing of many non-coding and protein-coding RNAs including proteins involved in neuronal survival, as well as mRNAs that encode proteins relevant for neurodegenerative diseases. Plays a role in maintaining mitochondrial homeostasis by regulating the processing of mitochondrial transcripts. Also regulates mRNA stability by recruiting CNOT7/CAF1 deadenylase on mRNA 3'UTR leading to poly(A) tail deadenylation and thus shortening. In response to oxidative insult, associates with stalled ribosomes localized to stress granules (SGs) and contributes to cell survival. Also participates in the normal skeletal muscle formation and regeneration, forming cytoplasmic myo-granules and binding mRNAs that encode sarcomeric proteins. Plays a role in the maintenance of the circadian clock periodicity via stabilization of the CRY1 and CRY2 proteins in a FBXL3-dependent manner. Negatively regulates the expression of CDK6. Regulates the expression of HDAC6, ATG7 and VCP in a PPIA/CYPA-dependent manner. The sequence is that of TAR DNA-binding protein 43 (Tardbp) from Mus musculus (Mouse).